We begin with the raw amino-acid sequence, 513 residues long: ATP synthase subunit alpha (513 aa).

169-176 (GDRQTGKT) provides a ligand contact to ATP.

It belongs to the ATPase alpha/beta chains family. As to quaternary structure, F-type ATPases have 2 components, CF(1) - the catalytic core - and CF(0) - the membrane proton channel. CF(1) has five subunits: alpha(3), beta(3), gamma(1), delta(1), epsilon(1). CF(0) has three main subunits: a(1), b(2) and c(9-12). The alpha and beta chains form an alternating ring which encloses part of the gamma chain. CF(1) is attached to CF(0) by a central stalk formed by the gamma and epsilon chains, while a peripheral stalk is formed by the delta and b chains.

The protein localises to the cell inner membrane. The enzyme catalyses ATP + H2O + 4 H(+)(in) = ADP + phosphate + 5 H(+)(out). Its function is as follows. Produces ATP from ADP in the presence of a proton gradient across the membrane. The alpha chain is a regulatory subunit. The polypeptide is ATP synthase subunit alpha (Methylobacillus flagellatus (strain ATCC 51484 / DSM 6875 / VKM B-1610 / KT)).